Here is a 442-residue protein sequence, read N- to C-terminus: Betaine reductase complex component B subunit alpha (442 aa).

As to quaternary structure, heterotetramer of two alpha and two beta subunits. Component of the betaine reductase complex, together with components A and C. PB is substrate specific.

The enzyme catalyses acetyl phosphate + trimethylamine + [thioredoxin]-disulfide + H2O = glycine betaine + [thioredoxin]-dithiol + phosphate + H(+). In terms of biological role, in the first step of betaine reductase, the substrate is bound to component PB via a Schiff base intermediate. Then the PB-activated substrate is nucleophilically attacked by the selenol anion of component PA to transform it to a carboxymethylated selenoether and the respective amine. By action of component PC, acetyl phosphate is formed, leaving component PA in its oxidized state. Finally component PA becomes reduced by the thioredoxin system to start a new catalytic cycle of reductive deamination. The polypeptide is Betaine reductase complex component B subunit alpha (grdI) (Peptoclostridium acidaminophilum (Eubacterium acidaminophilum)).